A 569-amino-acid polypeptide reads, in one-letter code: 4-coumarate--CoA ligase 2 (569 aa).

Residues S219, S220, G221, T222, T223, and K227 each coordinate ATP. (E)-4-coumaroyl-AMP-binding residues include F269 and S273. R290 contributes to the CoA binding site. Residues 292 to 361 (EMGAMLGAIE…ARLPQAIFGQ (70 aa)) are SBD1. Residues A339, Q361, G362, T366, and M374 each contribute to the (E)-4-coumaroyl-AMP site. Residues Q361, G362, and T366 each contribute to the ATP site. The tract at residues 362–429 (GYGMTEAGPV…IRGPQIMKGY (68 aa)) is SBD2. ATP is bound by residues D450 and R465. K467 and K471 together coordinate (E)-4-coumaroyl-AMP. Residues K473 and G474 each contribute to the CoA site. K556 is an ATP binding site.

The protein belongs to the ATP-dependent AMP-binding enzyme family. Requires Mg(2+) as cofactor. Expressed in roots, stems, leaf blades, leaf sheaths and spikelets.

The catalysed reaction is (E)-ferulate + ATP + CoA = (E)-feruloyl-CoA + AMP + diphosphate. It catalyses the reaction (E)-4-coumarate + ATP + CoA = (E)-4-coumaroyl-CoA + AMP + diphosphate. The enzyme catalyses (E)-caffeate + ATP + CoA = (E)-caffeoyl-CoA + AMP + diphosphate. It carries out the reaction (E)-cinnamate + ATP + CoA = (E)-cinnamoyl-CoA + AMP + diphosphate. The catalysed reaction is (E)-ferulate + ATP + H(+) = (E)-feruloyl-AMP + diphosphate. It catalyses the reaction (E)-feruloyl-AMP + CoA = (E)-feruloyl-CoA + AMP + H(+). The enzyme catalyses (E)-4-coumarate + ATP + H(+) = (E)-4-coumaroyl-AMP + diphosphate. It carries out the reaction (E)-4-coumaroyl-AMP + CoA = (E)-4-coumaroyl-CoA + AMP + H(+). The catalysed reaction is (E)-caffeate + ATP + H(+) = (E)-caffeoyl-AMP + diphosphate. It catalyses the reaction (E)-caffeoyl-AMP + CoA = (E)-caffeoyl-CoA + AMP + H(+). Its pathway is phytoalexin biosynthesis; 3,4',5-trihydroxystilbene biosynthesis; 3,4',5-trihydroxystilbene from trans-4-coumarate: step 1/2. Its function is as follows. Involved in the phenylpropanoid metabolism by mediating the activation of a number of hydroxycinnamates for the biosynthesis of monolignols and other phenolic secondary metabolites. Catalyzes the formation of CoA esters of cinnamate, 4-coumarate, caffeate and ferulate. Is more efficient with substrates in the following order: ferulate &gt; 4-coumarate &gt; caffeate &gt; cinnamate. Cannot convert sinapate to its corresponding CoA ester. Follows a two-step reaction mechanism, wherein the carboxylate substrate first undergoes adenylation by ATP, followed by a thioesterification in the presence of CoA to yield the final CoA thioester. This Oryza sativa subsp. japonica (Rice) protein is 4-coumarate--CoA ligase 2.